Here is a 986-residue protein sequence, read N- to C-terminus: P3N-PIPO polyprotein (986 aa).

In terms of domain architecture, Peptidase S30 spans 141–284 (KLTEGQMNHL…QSILNSMIQF (144 aa)). Catalysis depends on for P1 proteinase activity residues His192, Asp201, and Ser235. The short motif at 334–337 (KITC) is the Involved in interaction with stylet and aphid transmission element. Residues 592 to 594 (PTK) carry the Involved in virions binding and aphid transmission motif. One can recognise a Peptidase C6 domain in the interval 618–740 (LYIAKQGYCY…ESDIKHYRVG (123 aa)). Residues Cys626 and His699 each act as for helper component proteinase activity in the active site.

Belongs to the potyviridae P3N-PIPO polyprotein family. As to quaternary structure, interacts (via PIPO domain) with host PCaP1 protein; this interaction may help to anchor the movement complex to the plasma membrane from which the complex could move to the plasmodesmata. Post-translationally, potyviral RNA is expressed as two polyproteins which undergo post-translational proteolytic processing. Genome polyprotein is processed by NIa-pro, P1 and HC-pro proteinases resulting in the production of at least ten individual proteins. P3N-PIPO is cleaved by P1 and HC-pro proteinases resulting in the production of three individual proteins. The P1 proteinase and the HC-pro cleave only their respective C-termini autocatalytically.

The protein localises to the host cell junction. It localises to the host plasmodesma. It carries out the reaction Hydrolyzes a Gly-|-Gly bond at its own C-terminus, commonly in the sequence -Tyr-Xaa-Val-Gly-|-Gly, in the processing of the potyviral polyprotein.. Its function is as follows. Required for aphid transmission and also has proteolytic activity. Only cleaves a Gly-Gly dipeptide at its own C-terminus. Interacts with virions and aphid stylets. Acts as a suppressor of RNA-mediated gene silencing, also known as post-transcriptional gene silencing (PTGS), a mechanism of plant viral defense that limits the accumulation of viral RNAs. May have RNA-binding activity. Functionally, allows efficient cell to cell propagation, by bypassing the host cell wall barrier. Transports viral genome to neighboring plant cells directly through plasmosdesmata, without any budding. This chain is P3N-PIPO polyprotein, found in Potato virus Y (strain N) (PVY).